The primary structure comprises 701 residues: MIDKYQEPKHHQLRIGLVSPQQIMAWANKTLPTGEIVGEVKNYRTFSYDRDSETYKPERDGLFCERIFGPIKSGVCACGESRKIGDEKEKRTFCEKCGVEFVDSRIRRYQMGYIKLASPMAHVWYLKRIPSYIANLLDEKIKDLENLVYRDFIFAGPLTKKPTLLRLRGSFPESKTKFSGSRDILSQFLKTKSFQKLRDREFSAGAGAIRKRLANLDLEVIIYSSLAEWKKRKEQKAEIEIKPTRTERTEEEDRKIEKIKRRMRVLVRRMELAKHFLETNVKPEWMILRLLPVLPPELRPIFKISEVQFISSDLNTLYKEVISNNKILSDSLLGCKFVPEQLLTGQEKIVQVAVDQLLDNRISGQPRRDRNKQLYKSFSDILAGKEGRFRQTLLGRRVDYSGRSVIVVGPSLALHQCGLPREIALELFQTFIIRSLIRQRLASSVKTAKKQIREQERIVWDILEEVVQEHPVLLNRAPTLHRLGIQAFQPILTKERAIYLHPLVCKGFNADFDGDQMAVHLPLSLEAQAEAYLLMFSTQNLLSPGNGDPICVPTQDMLTGLYTLTLGNRRGICATRYNLWNRRNSQNERIDDKHYGSTKGKELLFCNPDDAIGAYRQKRINLDSPFWLKVTWGQHRIVSKELPVEVHYESLGTHHEIYGHCKIVRSVKTERHFIYIRTTVGHLFLDREIEDALKDFRARVV.

Zn(2+) is bound by residues C76, C78, C94, and C97. D511, D513, and D515 together coordinate Mg(2+).

Belongs to the RNA polymerase beta' chain family. RpoC1 subfamily. In plastids the minimal PEP RNA polymerase catalytic core is composed of four subunits: alpha, beta, beta', and beta''. When a (nuclear-encoded) sigma factor is associated with the core the holoenzyme is formed, which can initiate transcription. It depends on Mg(2+) as a cofactor. Zn(2+) is required as a cofactor.

The protein localises to the plastid. It is found in the chloroplast. The enzyme catalyses RNA(n) + a ribonucleoside 5'-triphosphate = RNA(n+1) + diphosphate. Its function is as follows. DNA-dependent RNA polymerase catalyzes the transcription of DNA into RNA using the four ribonucleoside triphosphates as substrates. This is DNA-directed RNA polymerase subunit beta' from Pelargonium hortorum (Common geranium).